The following is a 250-amino-acid chain: Cruxrhodopsin-1 (250 aa).

Over M1 to I9 the chain is Extracellular. The chain crosses the membrane as a helical span at residues W10–A27. Residues R28 to Y41 lie on the Cytoplasmic side of the membrane. A helical membrane pass occupies residues I42 to L60. Residues G61–Y77 lie on the Extracellular side of the membrane. Residues W78–D94 form a helical membrane-spanning segment. Topologically, residues L95–T105 are cytoplasmic. The chain crosses the membrane as a helical span at residues I106–L125. Residues S126–R138 lie on the Extracellular side of the membrane. A helical transmembrane segment spans residues L139–S158. The Cytoplasmic portion of the chain corresponds to S159–K176. A helical transmembrane segment spans residues T177 to I195. The Extracellular segment spans residues G196–I207. The chain crosses the membrane as a helical span at residues E208–L227. K220 carries the N6-(retinylidene)lysine modification. Over L228–D250 the chain is Cytoplasmic.

This sequence belongs to the archaeal/bacterial/fungal opsin family. As to quaternary structure, homotrimer.

The protein resides in the cell membrane. Its function is as follows. Light-driven proton pump. This is Cruxrhodopsin-1 (cop1) from Haloarcula argentinensis.